We begin with the raw amino-acid sequence, 864 residues long: Leucine--tRNA ligase (864 aa).

The short motif at 40–51 (PYPSGAGLHVGH) is the 'HIGH' region element. Residues 636-640 (KMSKS) carry the 'KMSKS' region motif. ATP is bound at residue Lys639.

The protein belongs to the class-I aminoacyl-tRNA synthetase family.

The protein resides in the cytoplasm. It carries out the reaction tRNA(Leu) + L-leucine + ATP = L-leucyl-tRNA(Leu) + AMP + diphosphate. The polypeptide is Leucine--tRNA ligase (Leptospira borgpetersenii serovar Hardjo-bovis (strain JB197)).